A 715-amino-acid chain; its full sequence is Polyribonucleotide nucleotidyltransferase (715 aa).

Positions 497 and 503 each coordinate Mg(2+). Residues 564-623 (PRLLTMKIDPEQIGLVIGPGGKTIKSITEQTGSKIDIADDGTVTIAAIQAKKAERARDLI) form the KH domain. The S1 motif domain occupies 633 to 701 (GEVYLGRVTR…NKGRLNLTRL (69 aa)).

It belongs to the polyribonucleotide nucleotidyltransferase family. Mg(2+) serves as cofactor.

The protein resides in the cytoplasm. The catalysed reaction is RNA(n+1) + phosphate = RNA(n) + a ribonucleoside 5'-diphosphate. Involved in mRNA degradation. Catalyzes the phosphorolysis of single-stranded polyribonucleotides processively in the 3'- to 5'-direction. In Crocosphaera subtropica (strain ATCC 51142 / BH68) (Cyanothece sp. (strain ATCC 51142)), this protein is Polyribonucleotide nucleotidyltransferase.